Reading from the N-terminus, the 504-residue chain is Serum response factor (504 aa).

Positions 1–28 are enriched in low complexity; sequence MLPSQAGAAAALGRGSALGGNLNRTPTG. Residues 1-94 form a disordered region; sequence MLPSQAGAAA…EELGAERRGL (94 aa). Residues 29–51 are compositionally biased toward gly residues; it reads RPGGGGGTRGANGGRVPGNGAGL. The span at 61 to 76 shows a compositional bias: low complexity; the sequence is AAAAAPTAGALYSGSE. Phosphoserine is present on residues Ser73, Ser75, Ser79, Ser81, and Ser99. Over residues 77-87 the composition is skewed to acidic residues; the sequence is GDSESGEEEEL. Residues 129–218 mediate DNA binding; sequence GAKPGKKTRG…ALIQTCLNSP (90 aa). The 61-residue stretch at 137 to 197 folds into the MADS-box domain; sequence RGRVKIKMEF…GHVYTFATRK (61 aa). Residues 164-218 form an involved in dimerization region; sequence IMKKAYELSTLTGTQVLLLVASETGHVYTFATRKLQPMITSETGKALIQTCLNSP. A disordered region spans residues 215–288; sequence LNSPDSPPRS…PSTSTTMQVS (74 aa). Phosphoserine occurs at positions 220 and 249. Residues 264-288 show a composition bias toward polar residues; the sequence is TVTNLPGTTSTIQTAPSTSTTMQVS. Residues Ser273, Ser303, Ser305, Ser312, and Ser379 are each glycosylated (O-linked (GlcNAc) serine). The disordered stretch occupies residues 359 to 381; it reads HQAPQQASPSRDSSTDLTQTSSS. Residues 368–381 are compositionally biased toward low complexity; sequence SRDSSTDLTQTSSS. A phosphoserine; by dsDNA kinase mark is found at Ser431 and Ser442.

As to quaternary structure, binds DNA as a multimer, probably a dimer. Interacts with MRTFA, forming the SRF-MRTFA nuclear complex which binds the 5'-CArG-3' consensus motif (CArG box) on DNA via SRF. Forms a nuclear ternary complex with MRTFA and SCAI. Interacts with MRTFB. Interacts with MLLT7/FOXO4, NKX3A and SSRP1. Interacts with ARID2. Interacts with SRFBP1. Interacts with FOXK1. Interacts with LPXN. Interacts with OLFM2; the interaction promotes dissociation of SRF from the transcriptional repressor HEY2, facilitates binding of SRF to target genes and promotes smooth muscle differentiation. Interacts with NKX3-1. Interacts with KAT5. Interacts with PURB. Post-translationally, phosphorylated by PRKDC.

It localises to the nucleus. Functionally, SRF is a transcription factor that binds to the serum response element (SRE), a short sequence of dyad symmetry located 300 bp to the 5' of the site of transcription initiation of some genes (such as FOS). Together with MRTFA transcription coactivator, controls expression of genes regulating the cytoskeleton during development, morphogenesis and cell migration. The SRF-MRTFA complex activity responds to Rho GTPase-induced changes in cellular globular actin (G-actin) concentration, thereby coupling cytoskeletal gene expression to cytoskeletal dynamics. Required for cardiac differentiation and maturation. The polypeptide is Serum response factor (Srf) (Mus musculus (Mouse)).